The chain runs to 291 residues: 4-hydroxy-tetrahydrodipicolinate synthase (291 aa).

Residue threonine 45 participates in pyruvate binding. Tyrosine 131 (proton donor/acceptor) is an active-site residue. Residue lysine 159 is the Schiff-base intermediate with substrate of the active site. Isoleucine 202 contributes to the pyruvate binding site.

This sequence belongs to the DapA family. As to quaternary structure, homotetramer; dimer of dimers.

Its subcellular location is the cytoplasm. It catalyses the reaction L-aspartate 4-semialdehyde + pyruvate = (2S,4S)-4-hydroxy-2,3,4,5-tetrahydrodipicolinate + H2O + H(+). The protein operates within amino-acid biosynthesis; L-lysine biosynthesis via DAP pathway; (S)-tetrahydrodipicolinate from L-aspartate: step 3/4. Its function is as follows. Catalyzes the condensation of (S)-aspartate-beta-semialdehyde [(S)-ASA] and pyruvate to 4-hydroxy-tetrahydrodipicolinate (HTPA). The polypeptide is 4-hydroxy-tetrahydrodipicolinate synthase (Methanococcoides burtonii (strain DSM 6242 / NBRC 107633 / OCM 468 / ACE-M)).